We begin with the raw amino-acid sequence, 1568 residues long: Kielin/chordin-like protein (1568 aa).

Residues Met1–Gly23 form the signal peptide. Residues Gly27–Ser49 are disordered. Positions Gly35 to Ser49 are enriched in polar residues. The stretch at Leu60–Cys87 forms a coiled coil. VWFC domains lie at Arg136–Arg193, Pro194–Gln253, Gln253–Asp312, Asp312–Asp370, Pro426–Asp485, Asp485–Pro544, Pro544–Ser602, Ser602–Pro661, Ala667–Asp725, Asp725–Asp782, Asp782–Gln841, His900–Arg959, Arg959–Ser1017, Ser1017–Ala1085, Pro1082–Arg1145, and Gln1149–Leu1209. The N-linked (GlcNAc...) asparagine glycan is linked to Asn340. N-linked (GlcNAc...) asparagine glycosylation occurs at Asn499. Asn1090 carries N-linked (GlcNAc...) asparagine glycosylation. Residues Ala1213 to Ser1389 form the VWFD domain. 2 disulfides stabilise this stretch: Cys1215–Cys1347 and Cys1237–Cys1388. A TIL domain is found at Cys1483–Cys1543.

As to quaternary structure, interacts with BMP7 and, by doing so, enhances binding to the type I receptors that contains cytoplasmic serine/threonine protein kinase domains. Also able to interact with activin-A and TGFB1.

It is found in the secreted. Its function is as follows. Enhances bone morphogenetic protein (BMP) signaling in a paracrine manner. In contrast, it inhibits both the activin-A and TGFB1-mediated signaling pathways. The polypeptide is Kielin/chordin-like protein (Homo sapiens (Human)).